A 194-amino-acid chain; its full sequence is Holliday junction branch migration complex subunit RuvA (194 aa).

Positions 1-64 (MISRLTGKLV…EDAHLLFGFA (64 aa)) are domain I. The segment at 65 to 143 (TAEERKTFRQ…AHAVTDGLFA (79 aa)) is domain II. The tract at residues 144-147 (AAPA) is flexible linker. A domain III region spans residues 147-194 (AADETEDIVGTLLALGYSEREAKAAVKGVPKGTDVGEGVRLALKNLLK).

The protein belongs to the RuvA family. As to quaternary structure, homotetramer. Forms an RuvA(8)-RuvB(12)-Holliday junction (HJ) complex. HJ DNA is sandwiched between 2 RuvA tetramers; dsDNA enters through RuvA and exits via RuvB. An RuvB hexamer assembles on each DNA strand where it exits the tetramer. Each RuvB hexamer is contacted by two RuvA subunits (via domain III) on 2 adjacent RuvB subunits; this complex drives branch migration. In the full resolvosome a probable DNA-RuvA(4)-RuvB(12)-RuvC(2) complex forms which resolves the HJ.

It localises to the cytoplasm. In terms of biological role, the RuvA-RuvB-RuvC complex processes Holliday junction (HJ) DNA during genetic recombination and DNA repair, while the RuvA-RuvB complex plays an important role in the rescue of blocked DNA replication forks via replication fork reversal (RFR). RuvA specifically binds to HJ cruciform DNA, conferring on it an open structure. The RuvB hexamer acts as an ATP-dependent pump, pulling dsDNA into and through the RuvAB complex. HJ branch migration allows RuvC to scan DNA until it finds its consensus sequence, where it cleaves and resolves the cruciform DNA. The polypeptide is Holliday junction branch migration complex subunit RuvA (Neisseria meningitidis serogroup C / serotype 2a (strain ATCC 700532 / DSM 15464 / FAM18)).